Consider the following 316-residue polypeptide: Pantothenate kinase (316 aa).

95–102 lines the ATP pocket; it reads GSVAVGKS.

This sequence belongs to the prokaryotic pantothenate kinase family.

It localises to the cytoplasm. It catalyses the reaction (R)-pantothenate + ATP = (R)-4'-phosphopantothenate + ADP + H(+). It functions in the pathway cofactor biosynthesis; coenzyme A biosynthesis; CoA from (R)-pantothenate: step 1/5. The sequence is that of Pantothenate kinase from Shewanella piezotolerans (strain WP3 / JCM 13877).